A 237-amino-acid chain; its full sequence is Fibroblast growth factor 3 (237 aa).

The signal sequence occupies residues 1–21 (MVIIWILLLSFISCGPQVSWA). Asn83 carries N-linked (GlcNAc...) asparagine glycosylation.

This sequence belongs to the heparin-binding growth factors family.

In terms of biological role, plays an important role in the regulation of embryonic development, cell proliferation, and cell differentiation. The polypeptide is Fibroblast growth factor 3 (fgf3) (Xenopus laevis (African clawed frog)).